A 376-amino-acid chain; its full sequence is MHTILLVVFMIILGAIIGGVTNMIAIKMLFHPFKPYYIFRFRIPFTPGLIPKRREEIARKIGQVIEEHLITEELIRQKLNQPQSRNMIQQLIHKQISKLKNDDVTIKKIAGFLGIDVNELVDYKLTTKFLNKLNFWYESNKYRKLSEILPQSFLDQCKGQIEYITDFLCERARNYLSSEKGERDIYEMLDTFFNEKGRIIGLLQMFMTKESIADRIQHELIRLTQHPQSQKIITKVLNDEYEIFKDKNLDEIIKEQQFKNYSQLVLNELKTYLNLKDKTERPIKQVVPQFIQFLEDDTSKRMTDFIIKGTSKHLTNIMKKINLRQLVEEQINTFDLKYIENLIIDIANKELKLIMTLGFILGGIIGFFQGVIAIFV.

A run of 2 helical transmembrane segments spans residues 4–24 (ILLV…TNMI) and 356–376 (TLGF…AIFV).

This sequence belongs to the UPF0754 family.

The protein resides in the cell membrane. The protein is UPF0754 membrane protein SE_1527 of Staphylococcus epidermidis (strain ATCC 12228 / FDA PCI 1200).